A 795-amino-acid polypeptide reads, in one-letter code: Mitochondrial inner membrane m-AAA protease component paraplegin (795 aa).

Residues 1-43 (MAVLLLLLRALRRGPGPGPRPLWGPGPAWSPGFPARPGRGRPY) constitute a mitochondrion transit peptide. The propeptide at 44–105 (MASRPPGDLA…GGTFYFNTSR (62 aa)) is removed in mature form. At 106 to 144 (LKQKNKEKDKSKGKAPEEDEEERRRRERDDQMYRERLRT) the chain is on the mitochondrial matrix side. Residues 108–133 (QKNKEKDKSKGKAPEEDEEERRRRER) are disordered. The span at 109–133 (KNKEKDKSKGKAPEEDEEERRRRER) shows a compositional bias: basic and acidic residues. A helical membrane pass occupies residues 145–165 (LLVIAVVMSLLNALSTSGGSI). Over 166 to 248 (SWNDFVHEML…DRIPVSYKRT (83 aa)) the chain is Mitochondrial intermembrane. A helical membrane pass occupies residues 249 to 269 (GFFGNALYSVGMTAVGLAILW). Topologically, residues 270-795 (YVFRLAGMTG…LGGEEPTWPK (526 aa)) are mitochondrial matrix. Positions 312, 352, 353, 354, 355, 356, and 357 each coordinate ATP. A 3'-nitrotyrosine modification is found at Tyr505. A Zn(2+)-binding site is contributed by His574. Glu575 is an active-site residue. Residues His578 and Asp650 each contribute to the Zn(2+) site. The interaction with PPIF stretch occupies residues 701–795 (HEARLLVAKA…LGGEEPTWPK (95 aa)). Residues 751–795 (PHGPKKMIAPQRWIDAQREKQDLGEEETEETQQPPLGGEEPTWPK) are disordered.

This sequence in the N-terminal section; belongs to the AAA ATPase family. In the C-terminal section; belongs to the peptidase M41 family. In terms of assembly, forms heterooligomers with AFG3L2; the m-AAA protease is composed of heterohexamers of AFG3L2 and SPG7. Component of the mitochondrial permeability transition pore complex (mPTPC), at least composed of SPG7, VDAC1 and PPIF. Interacts with MAIP1. Zn(2+) serves as cofactor. Post-translationally, upon import into the mitochondrion, the N-terminal transit peptide is cleaved by the mitochondrial-processing peptidase (MPP) to generate an intermediate form which undergoes a second proteolytic cleavage mediated by proteases AFG3L2 removing an additional N-terminal fragment to generate the proteolytically active mature form. As to expression, ubiquitous.

It is found in the mitochondrion inner membrane. The enzyme catalyses ATP + H2O = ADP + phosphate + H(+). Its function is as follows. Catalytic component of the m-AAA protease, a protease that plays a key role in proteostasis of inner mitochondrial membrane proteins, and which is essential for axonal and neuron development. SPG7 possesses both ATPase and protease activities: the ATPase activity is required to unfold substrates, threading them into the internal proteolytic cavity for hydrolysis into small peptide fragments. The m-AAA protease exerts a dual role in the mitochondrial inner membrane: it mediates the processing of specific regulatory proteins and ensures protein quality control by degrading misfolded polypeptides. Mediates protein maturation of the mitochondrial ribosomal subunit MRPL32/bL32m by catalyzing the cleavage of the presequence of MRPL32/bL32m prior to assembly into the mitochondrial ribosome. Acts as a regulator of calcium in neurons by mediating degradation of SMDT1/EMRE before its assembly with the uniporter complex, limiting the availability of SMDT1/EMRE for MCU assembly and promoting efficient assembly of gatekeeper subunits with MCU. Also regulates mitochondrial calcium by catalyzing degradation of MCU. Plays a role in the formation and regulation of the mitochondrial permeability transition pore (mPTP) and its proteolytic activity is dispensable for this function. The protein is Mitochondrial inner membrane m-AAA protease component paraplegin of Homo sapiens (Human).